The following is a 457-amino-acid chain: Autophagy-related protein 14 (457 aa).

Residues 31–109 (RIENVMALIE…TRRAALSRRK (79 aa)) adopt a coiled-coil conformation. Disordered stretches follow at residues 54–73 (ETNAPTKDRKDALQAQQRTA), 252–274 (PSQASVSSPSSTTDTESQRVSRP), and 433–457 (NKNLLMGDKSSPRRGTSGWMRVKNR). The segment covering 253 to 266 (SQASVSSPSSTTDT) has biased composition (low complexity).

The protein belongs to the ATG14 family. In terms of assembly, component of the autophagy-specific VPS34 PI3-kinase complex I.

The protein localises to the preautophagosomal structure membrane. Its subcellular location is the vacuole membrane. In terms of biological role, required for cytoplasm to vacuole transport (Cvt) and autophagy as a part of the autophagy-specific VPS34 PI3-kinase complex I. This complex is essential to recruit the ATG8-phosphatidylinositol conjugate and the ATG12-ATG5 conjugate to the pre-autophagosomal structure. ATG14 mediates the specific binding of the VPS34 PI3-kinase complex I to the preautophagosomal structure (PAS). Autophagy is required for proper vegetative growth, asexual/sexual reproduction, and full virulence. Autophagy is particularly involved in the biosynthesis of deoxynivalenol (DON), an important virulence determinant. The protein is Autophagy-related protein 14 of Gibberella zeae (strain ATCC MYA-4620 / CBS 123657 / FGSC 9075 / NRRL 31084 / PH-1) (Wheat head blight fungus).